The following is a 220-amino-acid chain: Cytidylate kinase (220 aa).

Residue 10-18 (GPASSGKST) participates in ATP binding.

The protein belongs to the cytidylate kinase family. Type 1 subfamily.

It localises to the cytoplasm. The enzyme catalyses CMP + ATP = CDP + ADP. It carries out the reaction dCMP + ATP = dCDP + ADP. This chain is Cytidylate kinase, found in Lactococcus lactis subsp. cremoris (strain SK11).